Here is a 242-residue protein sequence, read N- to C-terminus: 6-phosphogluconolactonase (242 aa).

This sequence belongs to the glucosamine/galactosamine-6-phosphate isomerase family. 6-phosphogluconolactonase subfamily.

The enzyme catalyses 6-phospho-D-glucono-1,5-lactone + H2O = 6-phospho-D-gluconate + H(+). It participates in carbohydrate degradation; pentose phosphate pathway; D-ribulose 5-phosphate from D-glucose 6-phosphate (oxidative stage): step 2/3. Its function is as follows. Hydrolysis of 6-phosphogluconolactone to 6-phosphogluconate. The polypeptide is 6-phosphogluconolactonase (pgl) (Pseudomonas putida (Arthrobacter siderocapsulatus)).